A 219-amino-acid chain; its full sequence is Protein P25 (219 aa).

Positions 57–62 (KRIRFR) match the Nuclear localization signal motif. The segment at 103-146 (DPTRLDSSVNELLVSNGLVTHYDRVHNVPIHTDGFEVVDFTTVF) is transcription activation. The short motif at 169 to 178 (VYMVCLVNTV) is the Nuclear export signal element.

It belongs to the benyvirus P25 protein family. As to quaternary structure, homooligomer.

It localises to the host cytoplasm. The protein resides in the host nucleus. In terms of biological role, pathogenicity factor implicated in symptom exacerbation. Might function as transcription activator (Potential). This chain is Protein P25, found in Beet necrotic yellow vein virus (isolate Japan/S) (BNYVV).